Consider the following 121-residue polypeptide: Putative ankyrin repeat protein L215 (121 aa).

ANK repeat units follow at residues 10–40 and 42–71; these read QYDS…SFKE and IHET…NKLV.

The protein is Putative ankyrin repeat protein L215 of Acanthamoeba polyphaga mimivirus (APMV).